A 147-amino-acid chain; its full sequence is Large ribosomal subunit protein uL15 (147 aa).

Basic and acidic residues predominate over residues 1–20 (MTLRLNDLKPADGARTERTR). Residues 1 to 61 (MTLRLNDLKP…GFEGGQTPMQ (61 aa)) form a disordered region. Residues 23–33 (RGIGSGLGKTA) are compositionally biased toward gly residues. The span at 34 to 47 (GRGHKGSFARKGGG) shows a compositional bias: basic residues.

The protein belongs to the universal ribosomal protein uL15 family. Part of the 50S ribosomal subunit.

Binds to the 23S rRNA. This Xanthomonas euvesicatoria pv. vesicatoria (strain 85-10) (Xanthomonas campestris pv. vesicatoria) protein is Large ribosomal subunit protein uL15.